We begin with the raw amino-acid sequence, 445 residues long: GTPase Der (445 aa).

EngA-type G domains are found at residues 3–167 (PVIA…NLPD) and 180–353 (IKLA…ASAN). Residues 9–16 (GRPNVGKS), 56–60 (DTGGF), 119–122 (NKAE), 186–193 (GRPNVGKS), 233–237 (DTAGL), and 298–301 (NKWD) each bind GTP. The 85-residue stretch at 354 to 438 (RKMSTPVLTR…PLRIQLKSSV (85 aa)) folds into the KH-like domain.

The protein belongs to the TRAFAC class TrmE-Era-EngA-EngB-Septin-like GTPase superfamily. EngA (Der) GTPase family. As to quaternary structure, associates with the 50S ribosomal subunit.

GTPase that plays an essential role in the late steps of ribosome biogenesis. This chain is GTPase Der, found in Polaromonas naphthalenivorans (strain CJ2).